The primary structure comprises 406 residues: Renin (406 aa).

A signal peptide spans 1-23 (MDGWRRMPRWGLLLLLWGSCTFG). Residues 24–66 (LPTDTTTFKRIFLKRMPSIRESLKERGVDMARLGPEWSQPMKR) constitute a propeptide, activation peptide. N-linked (GlcNAc...) asparagine glycosylation occurs at Asn-71. A Peptidase A1 domain is found at 86-403 (YYGEIGIGTP…DRRNNRIGFA (318 aa)). The active site involves Asp-104. An intrachain disulfide couples Cys-117 to Cys-124. Asn-141 carries N-linked (GlcNAc...) asparagine glycosylation. Cys-283 and Cys-287 form a disulfide bridge. The active site involves Asp-292. Cys-325 and Cys-362 form a disulfide bridge.

This sequence belongs to the peptidase A1 family. Interacts with ATP6AP2.

It localises to the secreted. It is found in the membrane. It catalyses the reaction Cleavage of Leu-|-Xaa bond in angiotensinogen to generate angiotensin I.. Interaction with ATP6AP2 results in a 5-fold increased efficiency in angiotensinogen processing. Its function is as follows. Renin is a highly specific endopeptidase, whose only known function is to generate angiotensin I from angiotensinogen in the plasma, initiating a cascade of reactions that produce an elevation of blood pressure and increased sodium retention by the kidney. The sequence is that of Renin (REN) from Macaca fascicularis (Crab-eating macaque).